Here is a 32-residue protein sequence, read N- to C-terminus: Cyclotide glopa B (32 aa).

Positions 1–32 (GGSVPCIETCVWTGCFLVPGCSCKSDKKCYLN) form a cross-link, cyclopeptide (Gly-Asn). Intrachain disulfides connect Cys6/Cys21, Cys10/Cys23, and Cys15/Cys29.

This is a cyclic peptide.

Functionally, probably participates in a plant defense mechanism. This is Cyclotide glopa B from Gloeospermum pauciflorum.